We begin with the raw amino-acid sequence, 399 residues long: S-adenosylmethionine synthase (399 aa).

H17 is a binding site for ATP. Residue D19 participates in Mg(2+) binding. E45 provides a ligand contact to K(+). 2 residues coordinate L-methionine: E58 and Q101. The segment at 101–111 (QSPDIAQGVDE) is flexible loop. Residues 177 to 179 (DAK), 244 to 245 (RF), D253, 259 to 260 (RK), A276, and K280 each bind ATP. Residue D253 participates in L-methionine binding. K284 contacts L-methionine.

It belongs to the AdoMet synthase family. As to quaternary structure, homotetramer; dimer of dimers. Requires Mg(2+) as cofactor. The cofactor is K(+).

The protein resides in the cytoplasm. It carries out the reaction L-methionine + ATP + H2O = S-adenosyl-L-methionine + phosphate + diphosphate. Its pathway is amino-acid biosynthesis; S-adenosyl-L-methionine biosynthesis; S-adenosyl-L-methionine from L-methionine: step 1/1. Its function is as follows. Catalyzes the formation of S-adenosylmethionine (AdoMet) from methionine and ATP. The overall synthetic reaction is composed of two sequential steps, AdoMet formation and the subsequent tripolyphosphate hydrolysis which occurs prior to release of AdoMet from the enzyme. This chain is S-adenosylmethionine synthase, found in Listeria monocytogenes serotype 4b (strain CLIP80459).